Here is a 120-residue protein sequence, read N- to C-terminus: MITKADKNATRKKRHARVRAKLTGTAERPRLNVFRSNQHIYAQVIDDVNGVTLVSASTLDKDLALNGTSNTEAATKVGESVAKRAVEKGVKEVVFDRGGYLYHGRVKALAEAAREAGLQF.

Belongs to the universal ribosomal protein uL18 family. In terms of assembly, part of the 50S ribosomal subunit; part of the 5S rRNA/L5/L18/L25 subcomplex. Contacts the 5S and 23S rRNAs.

This is one of the proteins that bind and probably mediate the attachment of the 5S RNA into the large ribosomal subunit, where it forms part of the central protuberance. The sequence is that of Large ribosomal subunit protein uL18 from Bacillus cereus (strain G9842).